A 20-amino-acid polypeptide reads, in one-letter code: Maximin-Ht (20 aa).

It belongs to the bombinin family. In terms of tissue distribution, expressed by the skin glands.

Its subcellular location is the secreted. Has antimicrobial activity. This is Maximin-Ht from Bombina maxima (Giant fire-bellied toad).